The sequence spans 190 residues: Peptidyl-tRNA hydrolase (190 aa).

Y18 is a binding site for tRNA. H23 functions as the Proton acceptor in the catalytic mechanism. TRNA-binding residues include F65, N67, and N113.

This sequence belongs to the PTH family. As to quaternary structure, monomer.

The protein resides in the cytoplasm. The catalysed reaction is an N-acyl-L-alpha-aminoacyl-tRNA + H2O = an N-acyl-L-amino acid + a tRNA + H(+). Functionally, hydrolyzes ribosome-free peptidyl-tRNAs (with 1 or more amino acids incorporated), which drop off the ribosome during protein synthesis, or as a result of ribosome stalling. Catalyzes the release of premature peptidyl moieties from peptidyl-tRNA molecules trapped in stalled 50S ribosomal subunits, and thus maintains levels of free tRNAs and 50S ribosomes. This chain is Peptidyl-tRNA hydrolase, found in Akkermansia muciniphila (strain ATCC BAA-835 / DSM 22959 / JCM 33894 / BCRC 81048 / CCUG 64013 / CIP 107961 / Muc).